Reading from the N-terminus, the 183-residue chain is Inner membrane-spanning protein YciB (183 aa).

A run of 5 helical transmembrane segments spans residues 19–39 (LYGV…QLIV), 53–73 (IMGI…DLNF), 76–96 (WKVT…QFVF), 121–141 (LGWA…SYYF), and 151–171 (TFGF…YLYP).

This sequence belongs to the YciB family.

The protein resides in the cell inner membrane. Functionally, plays a role in cell envelope biogenesis, maintenance of cell envelope integrity and membrane homeostasis. In Actinobacillus pleuropneumoniae serotype 7 (strain AP76), this protein is Inner membrane-spanning protein YciB.